A 215-amino-acid chain; its full sequence is Cytochrome b6 (215 aa).

The Cytoplasmic portion of the chain corresponds to methionine 1 to asparagine 31. Residues isoleucine 32–phenylalanine 52 traverse the membrane as a helical segment. Cysteine 35 provides a ligand contact to heme c. Topologically, residues alanine 53–serine 89 are lumenal, thylakoid. The heme b site is built by arginine 83, histidine 86, histidine 100, and arginine 103. The helical transmembrane segment at alanine 90 to phenylalanine 110 threads the bilayer. Residues lysine 111 to glutamate 115 lie on the Cytoplasmic side of the membrane. A helical transmembrane segment spans residues leucine 116–tyrosine 136. Over serine 137–serine 185 the chain is Lumenal, thylakoid. The helical transmembrane segment at alanine 186 to isoleucine 206 threads the bilayer. Heme b is bound by residues histidine 187 and histidine 202. Residues arginine 207–leucine 215 lie on the Cytoplasmic side of the membrane. Lysine 208 is a binding site for heme c.

The protein belongs to the cytochrome b family. PetB subfamily. As to quaternary structure, the 4 large subunits of the cytochrome b6-f complex are cytochrome b6, subunit IV (17 kDa polypeptide, PetD), cytochrome f and the Rieske protein, while the 4 small subunits are PetG, PetL, PetM and PetN. The complex functions as a dimer. It depends on heme b as a cofactor. Heme c is required as a cofactor.

It localises to the cellular thylakoid membrane. In terms of biological role, component of the cytochrome b6-f complex, which mediates electron transfer between photosystem II (PSII) and photosystem I (PSI), cyclic electron flow around PSI, and state transitions. The protein is Cytochrome b6 of Mastigocladus laminosus (Fischerella sp.).